We begin with the raw amino-acid sequence, 120 residues long: LOB domain-containing protein 8 (120 aa).

An LOB domain is found at 8–109; that stretch reads RPCCVCITKN…AYLHELEEKI (102 aa).

This sequence belongs to the LOB domain-containing protein family.

The chain is LOB domain-containing protein 8 (LBD8) from Arabidopsis thaliana (Mouse-ear cress).